A 467-amino-acid chain; its full sequence is Methylenetetrahydrofolate--tRNA-(uracil-5-)-methyltransferase TrmFO (467 aa).

11 to 16 (GAGLAG) lines the FAD pocket.

Belongs to the MnmG family. TrmFO subfamily. It depends on FAD as a cofactor.

Its subcellular location is the cytoplasm. The enzyme catalyses uridine(54) in tRNA + (6R)-5,10-methylene-5,6,7,8-tetrahydrofolate + NADH + H(+) = 5-methyluridine(54) in tRNA + (6S)-5,6,7,8-tetrahydrofolate + NAD(+). It catalyses the reaction uridine(54) in tRNA + (6R)-5,10-methylene-5,6,7,8-tetrahydrofolate + NADPH + H(+) = 5-methyluridine(54) in tRNA + (6S)-5,6,7,8-tetrahydrofolate + NADP(+). In terms of biological role, catalyzes the folate-dependent formation of 5-methyl-uridine at position 54 (M-5-U54) in all tRNAs. The sequence is that of Methylenetetrahydrofolate--tRNA-(uracil-5-)-methyltransferase TrmFO from Prochlorococcus marinus (strain MIT 9303).